A 111-amino-acid chain; its full sequence is Cytochrome c (111 aa).

Residue Ala-1 is modified to N-acetylalanine. Positions 22, 25, and 26 each coordinate heme c. Lys-80 is subject to N6,N6,N6-trimethyllysine. Met-88 is a binding site for heme c. Lys-94 bears the N6,N6,N6-trimethyllysine mark.

It belongs to the cytochrome c family. Binds 1 heme c group covalently per subunit.

The protein localises to the mitochondrion intermembrane space. In terms of biological role, electron carrier protein. The oxidized form of the cytochrome c heme group can accept an electron from the heme group of the cytochrome c1 subunit of cytochrome reductase. Cytochrome c then transfers this electron to the cytochrome oxidase complex, the final protein carrier in the mitochondrial electron-transport chain. The sequence is that of Cytochrome c from Brassica napus (Rape).